A 117-amino-acid chain; its full sequence is Large ribosomal subunit protein uL18 (117 aa).

It belongs to the universal ribosomal protein uL18 family. Part of the 50S ribosomal subunit; part of the 5S rRNA/L5/L18/L25 subcomplex. Contacts the 5S and 23S rRNAs.

Functionally, this is one of the proteins that bind and probably mediate the attachment of the 5S RNA into the large ribosomal subunit, where it forms part of the central protuberance. This chain is Large ribosomal subunit protein uL18, found in Polynucleobacter necessarius subsp. necessarius (strain STIR1).